We begin with the raw amino-acid sequence, 217 residues long: MSFDFYNELSRGCQAMGIELDRPGQERLYTYFVELKKWSQKVNLIAKGTGEAEIVENHFLDSLALLPLLPEGAGLLDIGTGAGLPGLICKAARPDLRLFLVEPRAKRVSFLRHIVRTLQLEGVEIYCSRIEDEPELFASEDISYITSRAVSDISGFLAMTEGFKSPHIRRLCLKGPRWQEELAEADEVLAAGNYQREKVVEYLLPFSGAERAIVVLR.

S-adenosyl-L-methionine-binding positions include glycine 79, leucine 84, isoleucine 130 to glutamate 131, and arginine 148.

Belongs to the methyltransferase superfamily. RNA methyltransferase RsmG family.

It localises to the cytoplasm. The enzyme catalyses guanosine(527) in 16S rRNA + S-adenosyl-L-methionine = N(7)-methylguanosine(527) in 16S rRNA + S-adenosyl-L-homocysteine. Its function is as follows. Specifically methylates the N7 position of guanine in position 527 of 16S rRNA. This Desulfotalea psychrophila (strain LSv54 / DSM 12343) protein is Ribosomal RNA small subunit methyltransferase G.